Reading from the N-terminus, the 61-residue chain is UPF0434 protein PSPA7_2181 (61 aa).

It belongs to the UPF0434 family.

The protein is UPF0434 protein PSPA7_2181 of Pseudomonas paraeruginosa (strain DSM 24068 / PA7) (Pseudomonas aeruginosa (strain PA7)).